The sequence spans 271 residues: Insulin-like growth factor-binding protein 5 (271 aa).

Positions 1–19 (MVLTAVLLLLAACAGSAQG) are cleaved as a signal peptide. The region spanning 22–102 (SFVHCEPCDE…LHGRGVCLNE (81 aa)) is the IGFBP N-terminal domain. 6 disulfides stabilise this stretch: Cys-26/Cys-52, Cys-29/Cys-54, Cys-37/Cys-55, Cys-44/Cys-58, Cys-66/Cys-79, and Cys-73/Cys-99. The span at 109-121 (AKIERDSREHEEP) shows a compositional bias: basic and acidic residues. Residues 109–129 (AKIERDSREHEEPTTSEMAEE) form a disordered region. Ser-115 carries the post-translational modification Phosphoserine. The Thyroglobulin type-1 domain maps to 188–262 (QGPCRRHMEA…MEYVDGDFQC (75 aa)). Cystine bridges form between Cys-191/Cys-218, Cys-229/Cys-240, and Cys-242/Cys-262.

Interacts with IGF1; this interaction enhances the growth stimulatory effects of IGF1 on fibroblasts. Interacts with CAV1; this interaction allows trafficking of IGFBP5 from the plasma membrane to the nucleus. Interacts with NCL; this interaction is necessary for IGFBP5 localization to the nucleus.

The protein resides in the secreted. It localises to the cytoplasm. Its subcellular location is the nucleus. Functionally, multifunctional protein that plays a critical role in regulating the availability of IGFs to their receptors and thereby regulates IGF-mediated cellular processes including proliferation, differentiation, and apoptosis in a cell-type specific manner. Increases the cell proliferation of osteoblasts, intestinal smooth muscle cells and neuroblastoma cells. Enhances adhesion and survival of epithelial cells but decreases adhesion of mesenchymal cells. Once secreted, acts as a major mediator of mTORC1-dependent feedback inhibition of IGF1 signaling. Also plays a role in the induction of extracellular matrix (ECM) production and deposition independently of its nuclear translocation and binding to IGFs. Acts itself as a growth factor that can act independently of IGFs to regulate bone formation. Acts as a ligand for the ROR1 receptor which triggers formation of ROR1/HER2 heterodimer to enhance CREB oncogenic signaling. The chain is Insulin-like growth factor-binding protein 5 (IGFBP5) from Bos taurus (Bovine).